Reading from the N-terminus, the 429-residue chain is MSDDKFDAIVVGAGVAGSVAALVMARAGLDVLVIERGDSAGCKNMTGGRLYAHTLEAIIPGFAVSAPVERKVTREKISFLTEESAVTLDFHREQPDVPQHASYTVLRNRLDPWLMEQAEQAGAQFIPGVRVDALVREGNKVTGVQAGDDILEANVVILADGVNSMLGRSLGMVPASDPHHYAVGVKEVIGLTPEQINDRFNITGEEGAAWLFAGSPSDGLMGGGFLYTNKDSISLGLVCGLGDIAHAQKSVPQMLEDFKQHPAIRPLISGGKLLEYSAHMVPEGGLAMVPQLVNEGVMIVGDAAGFCLNLGFTVRGMDLAIASAQAAATTVIAAKERADFSASSLAQYKRELEQSCVMRDMQHFRKIPALMENPRLFSQYPRMVADIMNEMFTIDGKPNQPVRKMIMGHAKKIGLINLLKDGIKGATAL.

FAD is bound at residue 8–22 (AIVVGAGVAGSVAAL).

This sequence belongs to the ETF-QO/FixC family. It depends on FAD as a cofactor.

In terms of biological role, probably accepts electrons from YdiQ/YdiR and reduces a quinone. The protein is Probable electron transfer flavoprotein-quinone oxidoreductase YdiS (ydiS) of Escherichia coli (strain K12).